A 131-amino-acid polypeptide reads, in one-letter code: Large ribosomal subunit protein bL21 (131 aa).

Belongs to the bacterial ribosomal protein bL21 family. In terms of assembly, part of the 50S ribosomal subunit. Contacts protein L20.

Its function is as follows. This protein binds to 23S rRNA in the presence of protein L20. The sequence is that of Large ribosomal subunit protein bL21 from Cereibacter sphaeroides (strain ATCC 17023 / DSM 158 / JCM 6121 / CCUG 31486 / LMG 2827 / NBRC 12203 / NCIMB 8253 / ATH 2.4.1.) (Rhodobacter sphaeroides).